The following is a 438-amino-acid chain: tRNA modification GTPase MnmE (438 aa).

The (6S)-5-formyl-5,6,7,8-tetrahydrofolate site is built by R20, E78, and K117. Residues 214–359 (GIRVLIIGKP…LIDEIKKLFY (146 aa)) form the TrmE-type G domain. Residue N224 participates in K(+) binding. GTP-binding positions include 224–229 (NVGKST), 243–249 (TDIPGTT), and 268–271 (DTAG). Position 228 (S228) interacts with Mg(2+). T243, I245, and T248 together coordinate K(+). T249 serves as a coordination point for Mg(2+). Residue K438 coordinates (6S)-5-formyl-5,6,7,8-tetrahydrofolate.

Belongs to the TRAFAC class TrmE-Era-EngA-EngB-Septin-like GTPase superfamily. TrmE GTPase family. Homodimer. Heterotetramer of two MnmE and two MnmG subunits. It depends on K(+) as a cofactor.

The protein resides in the cytoplasm. In terms of biological role, exhibits a very high intrinsic GTPase hydrolysis rate. Involved in the addition of a carboxymethylaminomethyl (cmnm) group at the wobble position (U34) of certain tRNAs, forming tRNA-cmnm(5)s(2)U34. In Ureaplasma parvum serovar 3 (strain ATCC 27815 / 27 / NCTC 11736), this protein is tRNA modification GTPase MnmE.